The primary structure comprises 460 residues: ERAD-associated E3 ubiquitin-protein ligase HRD1B (460 aa).

The Cytoplasmic segment spans residues 1–3 (MIQ). The helical transmembrane segment at 4 to 24 (LKVYAGLSTLATLVVIYHAFS) threads the bilayer. Residues 25–40 (SRGQFYPATVYLSTSK) lie on the Lumenal side of the membrane. The chain crosses the membrane as a helical span at residues 41-61 (INLVVLLNMGLVLMLSLWNLV). Residues 62–98 (KIVFLGSLREAEVERLNEQAWRELMEILFAITIFRQD) lie on the Cytoplasmic side of the membrane. A helical transmembrane segment spans residues 99–119 (FSVGFISLVVTLLLIKGLHWM). The Lumenal segment spans residues 120 to 140 (AQKRVEYIETTPSVTLLSHVR). The helical transmembrane segment at 141 to 161 (IVSFMVFLLILDCLLTYSSIQ) threads the bilayer. Residues 162-170 (QLIQSRKAS) are Cytoplasmic-facing. A helical transmembrane segment spans residues 171–191 (MSVFFTFEYMILATTTVSIIV). Over 192–225 (KYAFYVTDMLKEGQWEGKPVYTFYLELVRDLLHL) the chain is Lumenal. Residues 226–246 (SMYLCFFLMIFMNYGLPLHLI) form a helical membrane-spanning segment. Topologically, residues 247–460 (RELYETFRNF…TKGKSVADTA (214 aa)) are cytoplasmic. An RING-type; atypical zinc finger spans residues 292–330 (CIICREEMTSAKKLVCGHLFHVHCLRSWLERQNTCPTCR). The segment at 339-378 (ATSTASGNRGPHQESLQQGTGTSSSDGQGSSVSAAASENM) is disordered. Low complexity predominate over residues 353–375 (SLQQGTGTSSSDGQGSSVSAAAS).

This sequence belongs to the HRD1 family.

The protein localises to the endoplasmic reticulum membrane. It catalyses the reaction S-ubiquitinyl-[E2 ubiquitin-conjugating enzyme]-L-cysteine + [acceptor protein]-L-lysine = [E2 ubiquitin-conjugating enzyme]-L-cysteine + N(6)-ubiquitinyl-[acceptor protein]-L-lysine.. It participates in protein modification; protein ubiquitination. Functionally, probable component of the HRD1 ubiquitin ligase complex that mediates the rapid degradation of misfolded endoplasmic reticulum (ER) proteins, a process called ER-associated degradation (ERAD). Targets the misfolded LRR receptor kinase BRI1. Functions redundantly with HRD3A. This chain is ERAD-associated E3 ubiquitin-protein ligase HRD1B, found in Arabidopsis thaliana (Mouse-ear cress).